Consider the following 210-residue polypeptide: MPSSTSPALFPILYLASQSPRRQELLLQIGVRFELLLPRPDEDAEALEAELPGEAADAYVRRVTVAKAEAARARLVASGKPAAPVLVADTTVTIDGAILGKPADADDALAMLTRLAGREHEVLTAVAVIGADGELLPPALSRSSVRFSNAQRDAYVRYVETGEPFGKAGAYAIQGRAAEFIERIDGSHSGIMGLPLFETAALLRTARVAF.

Asp89 functions as the Proton acceptor in the catalytic mechanism.

The protein belongs to the Maf family. YhdE subfamily. It depends on a divalent metal cation as a cofactor.

It is found in the cytoplasm. It catalyses the reaction dTTP + H2O = dTMP + diphosphate + H(+). The catalysed reaction is UTP + H2O = UMP + diphosphate + H(+). Its function is as follows. Nucleoside triphosphate pyrophosphatase that hydrolyzes dTTP and UTP. May have a dual role in cell division arrest and in preventing the incorporation of modified nucleotides into cellular nucleic acids. In Burkholderia orbicola (strain AU 1054), this protein is dTTP/UTP pyrophosphatase.